We begin with the raw amino-acid sequence, 424 residues long: UDP-N-acetylglucosamine 1-carboxyvinyltransferase (424 aa).

22-23 provides a ligand contact to phosphoenolpyruvate; it reads KN. Residue Arg93 coordinates UDP-N-acetyl-alpha-D-glucosamine. The active-site Proton donor is the Cys117. Cys117 carries the 2-(S-cysteinyl)pyruvic acid O-phosphothioketal modification. Residues 122-126, Asp307, and Ile329 contribute to the UDP-N-acetyl-alpha-D-glucosamine site; that span reads RPVDL.

The protein belongs to the EPSP synthase family. MurA subfamily.

It is found in the cytoplasm. It catalyses the reaction phosphoenolpyruvate + UDP-N-acetyl-alpha-D-glucosamine = UDP-N-acetyl-3-O-(1-carboxyvinyl)-alpha-D-glucosamine + phosphate. It functions in the pathway cell wall biogenesis; peptidoglycan biosynthesis. In terms of biological role, cell wall formation. Adds enolpyruvyl to UDP-N-acetylglucosamine. The protein is UDP-N-acetylglucosamine 1-carboxyvinyltransferase of Chlorobaculum parvum (strain DSM 263 / NCIMB 8327) (Chlorobium vibrioforme subsp. thiosulfatophilum).